We begin with the raw amino-acid sequence, 418 residues long: MTSSRLYLRFLRRFSTATGIDSQTTAYPGAITMSKAKSKLRKVQDPDKALAIYKSVSNNSTSPLSSRYAMELTVQRLAKSQRFSDIEALIESHKNNPKIKTETFLSTLIRSYGRASMFDHAMKMFEEMDKLGTPRTVVSFNALLAACLHSDLFERVPQLFDEFPQRYNNITPDKISYGMLIKSYCDSGKPEKAMEIMRDMEVKGVEVTIIAFTTILGSLYKNGLVDEAESLWIEMVNKGCDLDNTVYNVRLMNAAKESPERVKELMEEMSSVGLKPDTVSYNYLMTAYCVKGMMSEAKKVYEGLEQPNAATFRTLIFHLCINGLYDQGLTVFKKSAIVHKIPDFKTCKHLTEGLVKNNRMEDARGVARIVKKKFPPRLVTEWKKLEEKLGLYSKGNAAAVSSSSQTREVLDQEREDDV.

A mitochondrion-targeting transit peptide spans 1–14 (MTSSRLYLRFLRRF). 8 PPR repeats span residues 101–135 (TETFLSTLIRSYGRASMFDHAMKMFEEMDKLGTPR), 136–166 (TVVSFNALLAACLHSDLFERVPQLFDEFPQR), 173–207 (DKISYGMLIKSYCDSGKPEKAMEIMRDMEVKGVEV), 208–242 (TIIAFTTILGSLYKNGLVDEAESLWIEMVNKGCDL), 243–276 (DNTVYNVRLMNAAKESPERVKELMEEMSSVGLKP), 277–311 (DTVSYNYLMTAYCVKGMMSEAKKVYEGLEQPNAAT), 312–342 (FRTLIFHLCINGLYDQGLTVFKKSAIVHKIP), and 343–373 (DFKTCKHLTEGLVKNNRMEDARGVARIVKKK).

Belongs to the PPR family. P subfamily.

It localises to the mitochondrion. The polypeptide is Pentatricopeptide repeat-containing protein At2g18520, mitochondrial (Arabidopsis thaliana (Mouse-ear cress)).